The chain runs to 316 residues: Transaldolase (316 aa).

Lysine 132 serves as the catalytic Schiff-base intermediate with substrate.

It belongs to the transaldolase family. Type 1 subfamily.

The protein localises to the cytoplasm. The enzyme catalyses D-sedoheptulose 7-phosphate + D-glyceraldehyde 3-phosphate = D-erythrose 4-phosphate + beta-D-fructose 6-phosphate. The protein operates within carbohydrate degradation; pentose phosphate pathway; D-glyceraldehyde 3-phosphate and beta-D-fructose 6-phosphate from D-ribose 5-phosphate and D-xylulose 5-phosphate (non-oxidative stage): step 2/3. Its function is as follows. Transaldolase is important for the balance of metabolites in the pentose-phosphate pathway. In Vibrio cholerae serotype O1 (strain ATCC 39315 / El Tor Inaba N16961), this protein is Transaldolase.